An 876-amino-acid polypeptide reads, in one-letter code: Alanine--tRNA ligase (876 aa).

4 residues coordinate Zn(2+): H562, H566, C666, and H670.

It belongs to the class-II aminoacyl-tRNA synthetase family. The cofactor is Zn(2+).

The protein localises to the cytoplasm. It carries out the reaction tRNA(Ala) + L-alanine + ATP = L-alanyl-tRNA(Ala) + AMP + diphosphate. In terms of biological role, catalyzes the attachment of alanine to tRNA(Ala) in a two-step reaction: alanine is first activated by ATP to form Ala-AMP and then transferred to the acceptor end of tRNA(Ala). Also edits incorrectly charged Ser-tRNA(Ala) and Gly-tRNA(Ala) via its editing domain. This is Alanine--tRNA ligase from Hahella chejuensis (strain KCTC 2396).